Here is a 119-residue protein sequence, read N- to C-terminus: Non-specific lipid-transfer protein 3 (119 aa).

The first 24 residues, 1–24, serve as a signal peptide directing secretion; it reads MARSMKLACVVLAMCMLVAPMAEA. 4 disulfides stabilise this stretch: Cys28–Cys77, Cys38–Cys54, Cys55–Cys100, and Cys75–Cys114.

The protein belongs to the plant LTP family. Expressed in roots, stem, leaves and tendrils of the mature plant.

Its function is as follows. Plant non-specific lipid-transfer proteins transfer phospholipids as well as galactolipids across membranes. May play a role in wax or cutin deposition in the cell walls of expanding epidermal cells and certain secretory tissues. The protein is Non-specific lipid-transfer protein 3 of Pisum sativum (Garden pea).